The primary structure comprises 248 residues: UPF0736 protein BCE33L1074 (248 aa).

It belongs to the UPF0736 family.

The protein is UPF0736 protein BCE33L1074 of Bacillus cereus (strain ZK / E33L).